A 379-amino-acid polypeptide reads, in one-letter code: Chaperone protein DnaJ (379 aa).

Residues 4–69 (DLYETLGVQK…QKRAAYDRYG (66 aa)) enclose the J domain. A CR-type zinc finger spans residues 137 to 215 (GKTAQIRVPT…CHGQGRVVEE (79 aa)). Positions 150, 153, 167, 170, 189, 192, 203, and 206 each coordinate Zn(2+). CXXCXGXG motif repeat units follow at residues 150-157 (CDVCTGTG), 167-174 (CGTCQGTG), 189-196 (CPTCGGRG), and 203-210 (CTKCHGQG).

This sequence belongs to the DnaJ family. As to quaternary structure, homodimer. Requires Zn(2+) as cofactor.

The protein localises to the cytoplasm. Functionally, participates actively in the response to hyperosmotic and heat shock by preventing the aggregation of stress-denatured proteins and by disaggregating proteins, also in an autonomous, DnaK-independent fashion. Unfolded proteins bind initially to DnaJ; upon interaction with the DnaJ-bound protein, DnaK hydrolyzes its bound ATP, resulting in the formation of a stable complex. GrpE releases ADP from DnaK; ATP binding to DnaK triggers the release of the substrate protein, thus completing the reaction cycle. Several rounds of ATP-dependent interactions between DnaJ, DnaK and GrpE are required for fully efficient folding. Also involved, together with DnaK and GrpE, in the DNA replication of plasmids through activation of initiation proteins. This is Chaperone protein DnaJ from Rhizobium meliloti (strain 1021) (Ensifer meliloti).